Reading from the N-terminus, the 411-residue chain is Alpha-1-antitrypsin 1-6 (411 aa).

The signal sequence occupies residues 1–25; sequence MTTPFSSHGLLLLVGLCCLLLITKT. 4 N-linked (GlcNAc...) asparagine glycosylation sites follow: N50, N89, N101, and N164.

This sequence belongs to the serpin family. As to expression, expressed predominantly in epididymis where it is found in the epithelial cells of the caput, corpus and cauda epididymis.

It localises to the secreted. Functionally, inhibitor of serine proteases. In Mus musculus (Mouse), this protein is Alpha-1-antitrypsin 1-6.